We begin with the raw amino-acid sequence, 57 residues long: UPF0391 membrane protein BRADO5617 (57 aa).

Helical transmembrane passes span Met1–Gly21 and Ile30–Leu50.

Belongs to the UPF0391 family.

The protein localises to the cell membrane. In Bradyrhizobium sp. (strain ORS 278), this protein is UPF0391 membrane protein BRADO5617.